A 205-amino-acid polypeptide reads, in one-letter code: ATP phosphoribosyltransferase (205 aa).

This sequence belongs to the ATP phosphoribosyltransferase family. Short subfamily.

Its subcellular location is the cytoplasm. It catalyses the reaction 1-(5-phospho-beta-D-ribosyl)-ATP + diphosphate = 5-phospho-alpha-D-ribose 1-diphosphate + ATP. It functions in the pathway amino-acid biosynthesis; L-histidine biosynthesis; L-histidine from 5-phospho-alpha-D-ribose 1-diphosphate: step 1/9. Catalyzes the condensation of ATP and 5-phosphoribose 1-diphosphate to form N'-(5'-phosphoribosyl)-ATP (PR-ATP). Has a crucial role in the pathway because the rate of histidine biosynthesis seems to be controlled primarily by regulation of HisG enzymatic activity. In Thermococcus gammatolerans (strain DSM 15229 / JCM 11827 / EJ3), this protein is ATP phosphoribosyltransferase.